Here is a 202-residue protein sequence, read N- to C-terminus: LexA repressor (202 aa).

Positions 28 to 48 form a DNA-binding region, H-T-H motif; that stretch reads RAEIAQRLGFRSPNAAEEHLK. Active-site for autocatalytic cleavage activity residues include Ser-119 and Lys-156.

The protein belongs to the peptidase S24 family. Homodimer.

The catalysed reaction is Hydrolysis of Ala-|-Gly bond in repressor LexA.. In terms of biological role, represses a number of genes involved in the response to DNA damage (SOS response), including recA and lexA. Binds to the 16 bp palindromic sequence 5'-CTGTATATATATACAG-3'. In the presence of single-stranded DNA, RecA interacts with LexA causing an autocatalytic cleavage which disrupts the DNA-binding part of LexA, leading to derepression of the SOS regulon and eventually DNA repair. This Cronobacter sakazakii (strain ATCC BAA-894) (Enterobacter sakazakii) protein is LexA repressor.